A 648-amino-acid chain; its full sequence is Threonine--tRNA ligase (648 aa).

The region spanning 1–63 (MSQISLTFPD…AASGRIAINT (63 aa)) is the TGS domain. The catalytic stretch occupies residues 247–544 (DHRKLGREME…LIENYSGKLP (298 aa)). Zn(2+) is bound by residues C344, H395, and H521.

Belongs to the class-II aminoacyl-tRNA synthetase family. As to quaternary structure, homodimer. It depends on Zn(2+) as a cofactor.

Its subcellular location is the cytoplasm. The enzyme catalyses tRNA(Thr) + L-threonine + ATP = L-threonyl-tRNA(Thr) + AMP + diphosphate + H(+). In terms of biological role, catalyzes the attachment of threonine to tRNA(Thr) in a two-step reaction: L-threonine is first activated by ATP to form Thr-AMP and then transferred to the acceptor end of tRNA(Thr). Also edits incorrectly charged L-seryl-tRNA(Thr). The polypeptide is Threonine--tRNA ligase (Paracoccus denitrificans (strain Pd 1222)).